Reading from the N-terminus, the 171-residue chain is Large ribosomal subunit protein bL17 (171 aa).

The span at 140–152 shows a compositional bias: basic and acidic residues; the sequence is KREIQTKAREEKR. The interval 140–171 is disordered; the sequence is KREIQTKAREEKRATRKSNSAPVSKETTSKKK. The span at 156-165 shows a compositional bias: polar residues; sequence KSNSAPVSKE.

It belongs to the bacterial ribosomal protein bL17 family. As to quaternary structure, part of the 50S ribosomal subunit. Contacts protein L32.

This is Large ribosomal subunit protein bL17 from Leptospira interrogans serogroup Icterohaemorrhagiae serovar copenhageni (strain Fiocruz L1-130).